A 427-amino-acid polypeptide reads, in one-letter code: Peptidase B (427 aa).

Residues Lys-195 and Asp-200 each coordinate Mn(2+). The active site involves Lys-207. Residues Asp-218, Asp-277, and Glu-279 each contribute to the Mn(2+) site. Residue Arg-281 is part of the active site.

Belongs to the peptidase M17 family. Homohexamer. Mn(2+) is required as a cofactor.

It localises to the cytoplasm. It catalyses the reaction Release of an N-terminal amino acid, Xaa, from a peptide or arylamide. Xaa is preferably Glu or Asp but may be other amino acids, including Leu, Met, His, Cys and Gln.. Probably plays an important role in intracellular peptide degradation. This Shigella dysenteriae serotype 1 (strain Sd197) protein is Peptidase B.